The sequence spans 938 residues: Myocardin (938 aa).

Residues 12-27 carry the MEF2C-binding motif; it reads IRSKFRSVLQLRLQQR. The RPEL 1 repeat unit spans residues 18–43; sequence SVLQLRLQQRRTQEQLANQGIIPPLK. The span at 48–61 shows a compositional bias: basic and acidic residues; sequence FHEQRKHLDSDKAK. Residues 48-68 are disordered; that stretch reads FHEQRKHLDSDKAKNSLKRKA. RPEL repeat units lie at residues 62 to 87 and 106 to 131; these read NSLK…QAST and DDLN…PVDS. Residues 153–205 form an HDAC5-binding region; that stretch reads FEEDSSSDGLSPDQTRSEDPQNSAGSPPDAKASDTPSTGSLGTNQDLASGSEN. Residues 154 to 281 form a disordered region; the sequence is EEDSSSDGLS…DQKAEKSPPP (128 aa). 3 stretches are compositionally biased toward polar residues: residues 159–177, 186–203, and 210–220; these read SDGL…NSAG, DTPS…ASGS, and SASQPSHQSDA. Over residues 248–265 the composition is skewed to basic residues; the sequence is NRHKKPKDPKPKVKKLKY. The SAP domain occupies 371–405; the sequence is LDDLKVSELRQQLRIRGLPVSGTKTALMDRLRPFQ. Phosphoserine; by GSK3-beta is present on residues S451, S455, S459, and S463. The stretch at 516 to 561 forms a coiled coil; sequence EKDKMLVEKQKVINELTWKLQQEQRQVEELRMQLQKQKRNNCSEKK. Phosphoserine; by GSK3-beta occurs at positions 626, 630, 634, and 638. Disordered regions lie at residues 635–678 and 693–734; these read PQHS…SSPI and SDKV…MTRS. The span at 699–715 shows a compositional bias: low complexity; it reads KFSIPSPTFSKSSSAIS. Residues 717 to 938 form a required for interaction with and ubiquitination by STUB1 region; the sequence is VTQPPSYEDA…SSMDLHLQQW (222 aa). Phosphoserine; by MAPK1 and MAPK3 is present on residues S815, S862, and S869. The residue at position 896 (T896) is a Phosphothreonine; by MAPK1 and MAPK3.

Homodimer. Interacts with SRF, its association does not depend on specific DNA sequences for ternary complex formation. Interacts with MLLT7/FOXO4. Interacts (via C-terminal) with EP300 (via the CREB-binding domain). Interacts with HDAC4 and HDAC5. Interacts with MEF2C. Interacts (via C-terminus) with STUB1/CHIP. Interacts with PURB. In terms of processing, ubiquitinated; by STUB1/CHIP at the C-terminus, leading to its degradation by the proteasome. Phosphorylation by GSK3B is required for STUB1/CHIP-mediated ubiquitination. Post-translationally, phosphorylation negatively regulates the intrinsic myocardin transcriptional activity. Phosphorylated; by GSK3B. Expressed in the heart, aorta and bladder. Expressed in smooth muscle cell-containing tissues: stomach, small intestine, colon, lung, placenta and uterus. Very faint expression in prostate and skeletal muscle.

The protein localises to the nucleus. Functionally, smooth muscle cells (SM) and cardiac muscle cells-specific transcriptional factor which uses the canonical single or multiple CArG boxes DNA sequence. Acts as a cofactor of serum response factor (SRF) with the potential to modulate SRF-target genes. Plays a crucial role in cardiogenesis, urinary bladder development, and differentiation of the smooth muscle cell lineage (myogenesis). Positively regulates the transcription of genes involved in vascular smooth muscle contraction. This is Myocardin (MYOCD) from Homo sapiens (Human).